Reading from the N-terminus, the 1050-residue chain is Atrial natriuretic peptide receptor 2 (1050 aa).

Residues 1–19 (MDLGHSLFVVFTCFLMARC) form the signal peptide. The Extracellular portion of the chain corresponds to 20-460 (RTEIGKNITV…FCNEDQLPVL (441 aa)). 2 N-linked (GlcNAc...) asparagine glycosylation sites follow: Asn26 and Asn74. A disulfide bridge links Cys84 with Cys110. N-linked (GlcNAc...) asparagine glycosylation is found at Asn169, Asn203, Asn285, Asn352, Asn366, and Asn415. A disulfide bridge connects residues Cys236 and Cys339. Residues 461 to 481 (GIVAVGSGLALIIFGISSFLI) traverse the membrane as a helical segment. Residues 482 to 1050 (YRKLKLEKEL…LGEKTDVYVI (569 aa)) are Cytoplasmic-facing. The region spanning 517–790 (SRLTISQRGS…PDFSYIKIFV (274 aa)) is the Protein kinase domain. The Guanylate cyclase domain maps to 865-995 (TIYFSDIVGF…DTVNTASRME (131 aa)).

Belongs to the adenylyl cyclase class-4/guanylyl cyclase family. In terms of processing, phosphorylated. Phosphorylation of the protein kinase-like domain is required for full activation by CNP. Post-translationally, glycosylated. As to expression, high levels found in liver, atrium and gill. Moderate levels found in brain and ventricle, and low levels in esophageal sphincter, stomach, posterior intestine and kidney.

The protein resides in the cell membrane. It catalyses the reaction GTP = 3',5'-cyclic GMP + diphosphate. Receptor for the C-type natriuretic peptide NPPC/CNP hormone. Has guanylate cyclase activity upon binding of its ligand. May play a role in the regulation of skeletal growth. The polypeptide is Atrial natriuretic peptide receptor 2 (npr2) (Anguilla japonica (Japanese eel)).